The primary structure comprises 434 residues: Hydrogenobyrinate a,c-diamide synthase (434 aa).

The GATase cobBQ-type domain maps to 243 to 434 (RIAVARDIAF…MHLIDVAGAA (192 aa)). The active-site Nucleophile is the Cys326.

The protein belongs to the CobB/CbiA family. As to quaternary structure, homodimer. Mg(2+) is required as a cofactor.

The enzyme catalyses hydrogenobyrinate + 2 L-glutamine + 2 ATP + 2 H2O = hydrogenobyrinate a,c-diamide + 2 L-glutamate + 2 ADP + 2 phosphate + 2 H(+). Its pathway is cofactor biosynthesis; adenosylcobalamin biosynthesis; cob(II)yrinate a,c-diamide from precorrin-2 (aerobic route): step 9/10. Catalyzes the ATP-dependent amidation of the two carboxylate groups at positions a and c of hydrogenobyrinate, using either L-glutamine or ammonia as the nitrogen source. To a much lesser extent, can also use cobyrinate as substrate in vitro, but the physiological substrate is indeed hydrogenobyrinate, as part of the aerobic pathway for cobalamin biosynthesis. In Sinorhizobium sp, this protein is Hydrogenobyrinate a,c-diamide synthase.